A 362-amino-acid chain; its full sequence is Adenosine deaminase (362 aa).

Zn(2+)-binding residues include His-19 and His-21. Residues His-21, Asp-23, and Gly-181 each contribute to the substrate site. His-208 contacts Zn(2+). Catalysis depends on Glu-211, which acts as the Proton donor. Asp-300 provides a ligand contact to Zn(2+).

It belongs to the metallo-dependent hydrolases superfamily. Adenosine and AMP deaminases family. Adenosine deaminase subfamily. Zn(2+) is required as a cofactor.

It carries out the reaction adenosine + H2O + H(+) = inosine + NH4(+). It catalyses the reaction 2'-deoxyadenosine + H2O + H(+) = 2'-deoxyinosine + NH4(+). Functionally, catalyzes the hydrolytic deamination of adenosine and 2-deoxyadenosine. The chain is Adenosine deaminase from Mycolicibacterium gilvum (strain PYR-GCK) (Mycobacterium gilvum (strain PYR-GCK)).